Here is a 197-residue protein sequence, read N- to C-terminus: FMN-dependent NADH:quinone oxidoreductase 1 (197 aa).

FMN is bound by residues S10, 16 to 18 (SQS), 93 to 96 (MYNF), and 137 to 140 (TRGG).

Belongs to the azoreductase type 1 family. As to quaternary structure, homodimer. It depends on FMN as a cofactor.

It catalyses the reaction 2 a quinone + NADH + H(+) = 2 a 1,4-benzosemiquinone + NAD(+). The catalysed reaction is N,N-dimethyl-1,4-phenylenediamine + anthranilate + 2 NAD(+) = 2-(4-dimethylaminophenyl)diazenylbenzoate + 2 NADH + 2 H(+). Its function is as follows. Quinone reductase that provides resistance to thiol-specific stress caused by electrophilic quinones. In terms of biological role, also exhibits azoreductase activity. Catalyzes the reductive cleavage of the azo bond in aromatic azo compounds to the corresponding amines. The chain is FMN-dependent NADH:quinone oxidoreductase 1 from Photobacterium profundum (strain SS9).